The following is a 179-amino-acid chain: 3-hydroxyanthranilate 3,4-dioxygenase (179 aa).

An O2-binding site is contributed by Arg-47. His-51, Glu-57, and His-96 together coordinate Fe cation. Glu-57 contacts substrate. Positions 100 and 110 each coordinate substrate. Cys-125, Cys-128, Cys-162, and Cys-165 together coordinate Fe cation.

It belongs to the 3-HAO family. Fe(2+) is required as a cofactor.

It catalyses the reaction 3-hydroxyanthranilate + O2 = (2Z,4Z)-2-amino-3-carboxymuconate 6-semialdehyde. It participates in cofactor biosynthesis; NAD(+) biosynthesis; quinolinate from L-kynurenine: step 3/3. Its function is as follows. Catalyzes the oxidative ring opening of 3-hydroxyanthranilate to 2-amino-3-carboxymuconate semialdehyde, which spontaneously cyclizes to quinolinate. The chain is 3-hydroxyanthranilate 3,4-dioxygenase from Bacillus thuringiensis (strain Al Hakam).